The following is a 441-amino-acid chain: E3 ubiquitin-protein ligase APD1 (441 aa).

A run of 2 helical transmembrane segments spans residues 60–80 (SNLYCFSLALLIWFFASFILI) and 305–325 (IAYVIGTGVVICFMLVAIQFC). The RING-type zinc finger occupies 390 to 429 (CAICFDVPRDCFFLPCGHSVSCYECGTTMQEADGSCPICR).

As to expression, expressed in the shoot apical meristems (SAM), root tips and inflorescences, and, at low levels, in floral buds and pollen.

It localises to the endomembrane system. It is found in the vacuole membrane. The enzyme catalyses S-ubiquitinyl-[E2 ubiquitin-conjugating enzyme]-L-cysteine + [acceptor protein]-L-lysine = [E2 ubiquitin-conjugating enzyme]-L-cysteine + N(6)-ubiquitinyl-[acceptor protein]-L-lysine.. It participates in protein modification; protein ubiquitination. In terms of biological role, involved in pollen mitosis II (PMII) regulation during male gametogenesis. This chain is E3 ubiquitin-protein ligase APD1, found in Arabidopsis thaliana (Mouse-ear cress).